The chain runs to 148 residues: Receptor activity-modifying protein 1 (148 aa).

Residues 1-26 (MARGLRGLPRRGLWLLLVNHLFLATA) form the signal peptide. Disulfide bonds link Cys27–Cys82, Cys40–Cys72, and Cys57–Cys104. At 27 to 118 (CQDTDHAALL…RALQDPPSSV (92 aa)) the chain is on the extracellular side. A helical transmembrane segment spans residues 119–140 (LCPFIVVPILATLLMTALVVWR). The Cytoplasmic segment spans residues 141–148 (SKRPEGIV).

This sequence belongs to the RAMP family. Heterodimer of CALCRL and RAMP1; the interaction induces allosteric modulation of CALCRL function and CGRP1/CALCA and CGRP2/CALCB ligand specificity. Heterodimer of CALCR and RAMP1; interaction forms the AMYR1 receptor complex for amylin/IAPP and CGRP1/CALCA ligands.

Its subcellular location is the cell membrane. In terms of biological role, accessory protein that interacts with and modulates the function of G-protein coupled receptors including calcitonin gene-related peptide type 1 receptor (CALCRL) and calcitonin receptor (CALCR). Required for the transport of CALCRL to the plasma membrane. Together with CALCRL, form the receptor complex for the calcitonin gene-related peptides CGRP1/CALCA and CGRP2/CALCB. Together with CALCR, form the AMYR1 receptor complex for amylin/IAPP and CGRP1/CALCA. The sequence is that of Receptor activity-modifying protein 1 (RAMP1) from Sus scrofa (Pig).